The primary structure comprises 209 residues: ATP phosphoribosyltransferase (209 aa).

It belongs to the ATP phosphoribosyltransferase family. Short subfamily. Heteromultimer composed of HisG and HisZ subunits.

The protein resides in the cytoplasm. It carries out the reaction 1-(5-phospho-beta-D-ribosyl)-ATP + diphosphate = 5-phospho-alpha-D-ribose 1-diphosphate + ATP. The protein operates within amino-acid biosynthesis; L-histidine biosynthesis; L-histidine from 5-phospho-alpha-D-ribose 1-diphosphate: step 1/9. Its function is as follows. Catalyzes the condensation of ATP and 5-phosphoribose 1-diphosphate to form N'-(5'-phosphoribosyl)-ATP (PR-ATP). Has a crucial role in the pathway because the rate of histidine biosynthesis seems to be controlled primarily by regulation of HisG enzymatic activity. This is ATP phosphoribosyltransferase from Caldicellulosiruptor saccharolyticus (strain ATCC 43494 / DSM 8903 / Tp8T 6331).